Consider the following 895-residue polypeptide: Clathrin interactor EPSIN 2 (895 aa).

Positions 18–150 constitute an ENTH domain; sequence KKVLKVPGVE…NDKERIAEVR (133 aa). 3 stretches are compositionally biased toward basic and acidic residues: residues 150-161, 177-236, and 245-257; these read RQKAAANRDKYR, DKYD…RSRS, and RSSEREREDDGHS. A disordered region spans residues 150–396; the sequence is RQKAAANRDK…PTVTSMSAPT (247 aa). 2 positions are modified to phosphoserine: Ser-270 and Ser-282. Positions 329-348 are enriched in low complexity; the sequence is AAPEAASPPTGTNTANTTAT. Polar residues-rich tracts occupy residues 349–358 and 387–396; these read FVNESPSQKV and PTVTSMSAPT. Positions 409 to 413 match the Clathrin binding motif; that stretch reads LADVF. Disordered stretches follow at residues 436 to 533 and 758 to 784; these read AGPA…PQEQ and KQTNTPATSTINMGKAMGSGTGLGRSG. Residues 440 to 454 are compositionally biased toward low complexity; sequence PSFSTSQPSTQSFDD. The ALPHA-ADR binding motif lies at 454–456; sequence DPF. 3 stretches are compositionally biased toward polar residues: residues 464–479, 515–533, and 759–769; these read FTSTDTDSTPQQNFGA, PASQNVQPPSNSPGFPQEQ, and QTNTPATSTIN.

It belongs to the epsin family. Interacts with clathrin, VTI12, DELTA-ADR and ALPHA-ADR.

The protein resides in the golgi apparatus. Its subcellular location is the cytoplasmic vesicle. The protein localises to the clathrin-coated vesicle. Its function is as follows. May have a role in transport via clathrin-coated vesicles from the trans-Golgi network to endosomes. Stimulates clathrin assembly. Binds to membranes enriched in phosphatidylinositol 3-phosphate (PtdIns(3)P). Plays an important role in protein trafficking. This is Clathrin interactor EPSIN 2 (EPSIN2) from Arabidopsis thaliana (Mouse-ear cress).